Reading from the N-terminus, the 392-residue chain is UDP-N-acetylglucosamine--N-acetylmuramyl-(pentapeptide) pyrophosphoryl-undecaprenol N-acetylglucosamine transferase (392 aa).

UDP-N-acetyl-alpha-D-glucosamine is bound by residues 14-16, Asn124, Arg167, Ser195, Ile251, and Gln296; that span reads TGG.

This sequence belongs to the glycosyltransferase 28 family. MurG subfamily.

The protein resides in the cell inner membrane. The enzyme catalyses di-trans,octa-cis-undecaprenyl diphospho-N-acetyl-alpha-D-muramoyl-L-alanyl-D-glutamyl-meso-2,6-diaminopimeloyl-D-alanyl-D-alanine + UDP-N-acetyl-alpha-D-glucosamine = di-trans,octa-cis-undecaprenyl diphospho-[N-acetyl-alpha-D-glucosaminyl-(1-&gt;4)]-N-acetyl-alpha-D-muramoyl-L-alanyl-D-glutamyl-meso-2,6-diaminopimeloyl-D-alanyl-D-alanine + UDP + H(+). The protein operates within cell wall biogenesis; peptidoglycan biosynthesis. Its function is as follows. Cell wall formation. Catalyzes the transfer of a GlcNAc subunit on undecaprenyl-pyrophosphoryl-MurNAc-pentapeptide (lipid intermediate I) to form undecaprenyl-pyrophosphoryl-MurNAc-(pentapeptide)GlcNAc (lipid intermediate II). This Sphingopyxis alaskensis (strain DSM 13593 / LMG 18877 / RB2256) (Sphingomonas alaskensis) protein is UDP-N-acetylglucosamine--N-acetylmuramyl-(pentapeptide) pyrophosphoryl-undecaprenol N-acetylglucosamine transferase.